Consider the following 347-residue polypeptide: Merozoite surface protein P12 (347 aa).

A signal peptide (or 25) is located at residues 1 to 23 (MIKLSKKYCLGISFVLYILLSVC). 6-Cys domains are found at residues 27–172 (KNLT…IPSL) and 175–305 (KVKG…ISSS). An N-linked (GlcNAc...) asparagine glycan is attached at N28. 3 disulfides stabilise this stretch: C31/C53, C67/C138, and C81/C136. Residues N147, N200, N228, N242, N265, and N322 are each glycosylated (N-linked (GlcNAc...) asparagine). 3 cysteine pairs are disulfide-bonded: C179–C211, C225–C286, and C236–C284. A lipid anchor (GPI-anchor amidated asparagine) is attached at N322. The propeptide at 323–347 (SSFLTLSSYCAFITFIITSFLSFIL) is removed in mature form.

In terms of assembly, heterodimer; heterodimerizes with PF41. May form an antiparallel heterodimer with PF41.

The protein localises to the cell surface. It is found in the cell membrane. In Plasmodium falciparum, this protein is Merozoite surface protein P12 (PF12).